Consider the following 212-residue polypeptide: Thymidylate kinase (212 aa).

10–17 (GGEGSGKT) lines the ATP pocket.

Belongs to the thymidylate kinase family.

The catalysed reaction is dTMP + ATP = dTDP + ADP. Phosphorylation of dTMP to form dTDP in both de novo and salvage pathways of dTTP synthesis. In Marinomonas sp. (strain MWYL1), this protein is Thymidylate kinase.